A 433-amino-acid polypeptide reads, in one-letter code: Glutamate-1-semialdehyde 2,1-aminomutase (433 aa).

K271 carries the post-translational modification N6-(pyridoxal phosphate)lysine.

This sequence belongs to the class-III pyridoxal-phosphate-dependent aminotransferase family. HemL subfamily. Homodimer. Pyridoxal 5'-phosphate serves as cofactor.

It localises to the cytoplasm. It catalyses the reaction (S)-4-amino-5-oxopentanoate = 5-aminolevulinate. It participates in porphyrin-containing compound metabolism; protoporphyrin-IX biosynthesis; 5-aminolevulinate from L-glutamyl-tRNA(Glu): step 2/2. It functions in the pathway porphyrin-containing compound metabolism; chlorophyll biosynthesis. This chain is Glutamate-1-semialdehyde 2,1-aminomutase, found in Prochlorococcus marinus (strain SARG / CCMP1375 / SS120).